We begin with the raw amino-acid sequence, 71 residues long: Vitellogenin-B2 (71 aa).

An N-terminal signal peptide occupies residues 1–15 (MRGIILALLLALAGC). Residues 24–71 (FSESKTYVYNYEGIILNGIPENGLARSGIKLNCKVELSGYAQRSYMLK) enclose the Vitellogenin domain.

In terms of tissue distribution, produced by the liver, secreted into the blood and then sequestered by receptor mediated endocytosis into growing oocytes, where it is generally cleaved, giving rise to the respective yolk components.

Functionally, precursor of the major egg-yolk proteins that are sources of nutrients during early development of oviparous organisms. This is Vitellogenin-B2 from Xenopus laevis (African clawed frog).